Here is a 755-residue protein sequence, read N- to C-terminus: 1,4-alpha-glucan branching enzyme GlgB (755 aa).

The active-site Nucleophile is the Asp431. The Proton donor role is filled by Glu484.

The protein belongs to the glycosyl hydrolase 13 family. GlgB subfamily. In terms of assembly, monomer.

It catalyses the reaction Transfers a segment of a (1-&gt;4)-alpha-D-glucan chain to a primary hydroxy group in a similar glucan chain.. Its pathway is glycan biosynthesis; glycogen biosynthesis. In terms of biological role, catalyzes the formation of the alpha-1,6-glucosidic linkages in glycogen by scission of a 1,4-alpha-linked oligosaccharide from growing alpha-1,4-glucan chains and the subsequent attachment of the oligosaccharide to the alpha-1,6 position. This Prochlorococcus marinus (strain NATL2A) protein is 1,4-alpha-glucan branching enzyme GlgB.